The following is a 393-amino-acid chain: Nuclear hormone receptor family member nhr-90 (393 aa).

The nuclear receptor DNA-binding region spans 6–79 (LQTCKICGAE…AGMKIEYFQH (74 aa)). The NR C4-type zinc finger occupies 9–30 (CKICGAENTRGNHFGVQCCRAC). The NR C4-type; degenerate zinc finger occupies 47–62 (CLSVHCGEAARFCKPC). Residues 121–388 (DLNSLVGKAS…FSHPEMFIDT (268 aa)) form the NR LBD domain.

This sequence belongs to the nuclear hormone receptor family.

The protein resides in the nucleus. In terms of biological role, orphan nuclear receptor. This chain is Nuclear hormone receptor family member nhr-90 (nhr-90), found in Caenorhabditis elegans.